The chain runs to 415 residues: Imidazolonepropionase (415 aa).

Positions 76 and 78 each coordinate Fe(3+). Zn(2+)-binding residues include H76 and H78. 4-imidazolone-5-propanoate-binding residues include R85, Y148, and H181. Y148 provides a ligand contact to N-formimidoyl-L-glutamate. H246 contributes to the Fe(3+) binding site. H246 contacts Zn(2+). 4-imidazolone-5-propanoate is bound at residue E249. D320 contacts Fe(3+). Position 320 (D320) interacts with Zn(2+). Positions 322 and 324 each coordinate N-formimidoyl-L-glutamate. T325 provides a ligand contact to 4-imidazolone-5-propanoate.

It belongs to the metallo-dependent hydrolases superfamily. HutI family. It depends on Zn(2+) as a cofactor. Fe(3+) serves as cofactor.

It is found in the cytoplasm. It carries out the reaction 4-imidazolone-5-propanoate + H2O = N-formimidoyl-L-glutamate. It functions in the pathway amino-acid degradation; L-histidine degradation into L-glutamate; N-formimidoyl-L-glutamate from L-histidine: step 3/3. In terms of biological role, catalyzes the hydrolytic cleavage of the carbon-nitrogen bond in imidazolone-5-propanoate to yield N-formimidoyl-L-glutamate. It is the third step in the universal histidine degradation pathway. In Thermoanaerobacter pseudethanolicus (strain ATCC 33223 / 39E) (Clostridium thermohydrosulfuricum), this protein is Imidazolonepropionase.